The sequence spans 412 residues: Serine hydroxymethyltransferase (412 aa).

(6S)-5,6,7,8-tetrahydrofolate contacts are provided by residues L114 and 118–120; that span reads GHL. K223 is modified (N6-(pyridoxal phosphate)lysine).

This sequence belongs to the SHMT family. As to quaternary structure, homodimer. It depends on pyridoxal 5'-phosphate as a cofactor.

It is found in the cytoplasm. The catalysed reaction is (6R)-5,10-methylene-5,6,7,8-tetrahydrofolate + glycine + H2O = (6S)-5,6,7,8-tetrahydrofolate + L-serine. Its pathway is one-carbon metabolism; tetrahydrofolate interconversion. It participates in amino-acid biosynthesis; glycine biosynthesis; glycine from L-serine: step 1/1. Functionally, catalyzes the reversible interconversion of serine and glycine with tetrahydrofolate (THF) serving as the one-carbon carrier. This reaction serves as the major source of one-carbon groups required for the biosynthesis of purines, thymidylate, methionine, and other important biomolecules. Also exhibits THF-independent aldolase activity toward beta-hydroxyamino acids, producing glycine and aldehydes, via a retro-aldol mechanism. This chain is Serine hydroxymethyltransferase, found in Mesoplasma florum (strain ATCC 33453 / NBRC 100688 / NCTC 11704 / L1) (Acholeplasma florum).